The primary structure comprises 412 residues: Citrate synthase (412 aa).

Residues H305 and D364 contribute to the active site.

The protein belongs to the citrate synthase family.

The catalysed reaction is oxaloacetate + acetyl-CoA + H2O = citrate + CoA + H(+). It participates in carbohydrate metabolism; tricarboxylic acid cycle; isocitrate from oxaloacetate: step 1/2. This chain is Citrate synthase (gltA), found in Rickettsia bellii.